Here is a 122-residue protein sequence, read N- to C-terminus: Small ribosomal subunit protein uS13 (122 aa).

Residues 99–122 form a disordered region; it reads RGQRTHTNARTRKGPAKAIAGKKK.

The protein belongs to the universal ribosomal protein uS13 family. In terms of assembly, part of the 30S ribosomal subunit. Forms a loose heterodimer with protein S19. Forms two bridges to the 50S subunit in the 70S ribosome.

In terms of biological role, located at the top of the head of the 30S subunit, it contacts several helices of the 16S rRNA. In the 70S ribosome it contacts the 23S rRNA (bridge B1a) and protein L5 of the 50S subunit (bridge B1b), connecting the 2 subunits; these bridges are implicated in subunit movement. Contacts the tRNAs in the A and P-sites. The polypeptide is Small ribosomal subunit protein uS13 (Rhodopseudomonas palustris (strain HaA2)).